Reading from the N-terminus, the 709-residue chain is Protein IMPAIRED IN BABA-INDUCED STERILITY 1 (709 aa).

The N-myristoyl glycine moiety is linked to residue glycine 2. The disordered stretch occupies residues serine 53 to serine 80. The Protein kinase domain maps to phenylalanine 131–phenylalanine 418. ATP contacts are provided by residues isoleucine 137–valine 145 and lysine 160. The Proton acceptor role is filled by aspartate 255. Disordered stretches follow at residues serine 434 to glycine 536 and serine 566 to glutamate 609. A compositionally biased stretch (basic and acidic residues) spans lysine 437–arginine 449. A compositionally biased stretch (basic residues) spans histidine 484 to histidine 494. Positions serine 495 to threonine 505 are enriched in polar residues. Basic and acidic residues-rich tracts occupy residues lysine 509–histidine 523 and valine 586–glutamate 609.

The protein belongs to the protein kinase superfamily. Ser/Thr protein kinase family.

Functionally, required for beta-aminobutyric acid (BABA)-induced resistance (BABA-IR) against bacteria (e.g. P.syringae) and oomycetes (e.g. H.parasitica) via priming for salicylate (SA)-dependent defense responses such as pathogenesis-related PR-1 gene expression and trailing necrosis. Involved in BABA-mediated sterility. Necessary for the inheritance of BABA-priming to next generation, especially for the primed to be primed phenotype which consists in an enhanced second BABA-priming in transgenerationally primed plants. In Arabidopsis thaliana (Mouse-ear cress), this protein is Protein IMPAIRED IN BABA-INDUCED STERILITY 1.